The chain runs to 81 residues: MKQGIHPDFQKVVFMDSATGAKFLAGSTLKPEETVDYEGETYPLVRVEVSSDSHPFYTGKQKFAQADGRIEKFNKKYGLKK.

It belongs to the bacterial ribosomal protein bL31 family. Type B subfamily. As to quaternary structure, part of the 50S ribosomal subunit.

The polypeptide is Large ribosomal subunit protein bL31B (Lactobacillus helveticus (strain DPC 4571)).